A 253-amino-acid polypeptide reads, in one-letter code: MYFDEEQLLKYTIYAYRLSFFVGICSLFIAKSCLPEFLQYGKTYRPKENSKYSSILERIKKFTVPKAYFSHFYYLATFLSLVTLYFYPKFPIVWIIFGHSLRRLYETLYVLHYTSNSRMNWSHYLVGIWFYSVLLLILNISLYKNSIPNTLNMNAFIIFCIASWDQYKNHVILANLVKYSLPTGRLFRLVCCPHYLDEIIIYSTLLPYEQEFYLTLVWVITSLTISALETKNYYRHKFKDNHVAPYAIIPFII.

4 helical membrane-spanning segments follow: residues 18-38 (LSFF…PEFL), 78-98 (FLSL…IIFG), 123-143 (HYLV…ISLY), and 200-220 (IIYS…VWVI).

Belongs to the steroid 5-alpha reductase family. Polyprenal reductase subfamily.

It localises to the endoplasmic reticulum membrane. The catalysed reaction is a di-trans,poly-cis-dolichal + NADP(+) = a di-trans,poly-cis-polyprenal + NADPH + H(+). It functions in the pathway protein modification; protein glycosylation. Its function is as follows. Plays a key role in early steps of protein N-linked glycosylation by being involved in the conversion of polyprenol into dolichol. Acts as a polyprenal reductase that mediates the reduction of polyprenal into dolichal in a NADP-dependent mechanism. Dolichols are required for the synthesis of dolichol-linked monosaccharides and the oligosaccharide precursor used for N-glycosylation. The sequence is that of Polyprenal reductase from Saccharomyces cerevisiae (strain ATCC 204508 / S288c) (Baker's yeast).